Reading from the N-terminus, the 247-residue chain is Coproheme decarboxylase (247 aa).

Residues Arg-129, 143-147 (YPMDK), His-170, Gln-183, and Ser-221 contribute to the Fe-coproporphyrin III site. The active site involves Tyr-143.

It belongs to the ChdC family. Type 1 subfamily. Fe-coproporphyrin III serves as cofactor.

It carries out the reaction Fe-coproporphyrin III + 2 H2O2 + 2 H(+) = heme b + 2 CO2 + 4 H2O. The enzyme catalyses Fe-coproporphyrin III + H2O2 + H(+) = harderoheme III + CO2 + 2 H2O. The catalysed reaction is harderoheme III + H2O2 + H(+) = heme b + CO2 + 2 H2O. It participates in porphyrin-containing compound metabolism; protoheme biosynthesis. Involved in coproporphyrin-dependent heme b biosynthesis. Catalyzes the decarboxylation of Fe-coproporphyrin III (coproheme) to heme b (protoheme IX), the last step of the pathway. The reaction occurs in a stepwise manner with a three-propionate intermediate. The protein is Coproheme decarboxylase of Bacillus cereus (strain AH820).